The chain runs to 457 residues: Proline-specific permease ProY (457 aa).

Over 1–17 (MESKNKLKRGLSTRHIR) the chain is Cytoplasmic. A run of 2 helical transmembrane segments spans residues 18–38 (FMAL…DAIK) and 39–59 (MAGP…YIIM). The Cytoplasmic portion of the chain corresponds to 60-84 (RALGEMSVHNPAASSFSRYAQENLG). The helical transmembrane segment at 85–105 (PLAGYITGWTYCFEILIVAIA) threads the bilayer. Over 106-113 (DVTAFGIY) the chain is Periplasmic. Residues 114–134 (MGVWFPTVPHWIWVLSVVLII) form a helical membrane-spanning segment. The Cytoplasmic segment spans residues 135–156 (CAVNLMSVKVFGELEFWFSFFK). Residues 157 to 177 (VATIIIMIVAGFGIIIWGIGN) form a helical membrane-spanning segment. Topologically, residues 178 to 197 (GGQPTGIHNLWSNGGFFSNG) are periplasmic. Residues 198 to 218 (WLGMVMSLQMVMFAYGGIEII) form a helical membrane-spanning segment. Over 219 to 242 (GITAGEAKDPEKSIPRAINSVPMR) the chain is Cytoplasmic. Residues 243-263 (ILVFYVGTLFVIMSIYPWNQV) traverse the membrane as a helical segment. Residues 264–277 (GTAGSPFVLTFQHM) lie on the Periplasmic side of the membrane. The helical transmembrane segment at 278–298 (GITFAASILNFVVLTASLSAI) threads the bilayer. Over 299-331 (NSDVFGVGRMLHGMAEQGSAPKIFSKTSRRGIP) the chain is Cytoplasmic. Residues 332-352 (WVTVLVMTTALLFAVYLNYIM) form a helical membrane-spanning segment. Topologically, residues 353 to 355 (PEN) are periplasmic. Residues 356 to 376 (VFLVIASLATFATVWVWIMIL) form a helical membrane-spanning segment. Over 377–399 (LSQIAFRRRLPPEEVKALKFKVP) the chain is Cytoplasmic. Residues 400–420 (GGVATTIGGLIFLLFIIGLIG) traverse the membrane as a helical segment. The Periplasmic portion of the chain corresponds to 421-424 (YHPD). The helical transmembrane segment at 425–445 (TRISLYVGFAWIVVLLIGWMF) threads the bilayer. Over 446–457 (KRRHDRQLAENQ) the chain is Cytoplasmic.

Belongs to the amino acid-polyamine-organocation (APC) superfamily. Amino acid transporter (AAT) (TC 2.A.3.1) family.

It localises to the cell inner membrane. Functionally, permease that is involved in the transport across the cytoplasmic membrane of proline. The protein is Proline-specific permease ProY (proY) of Escherichia coli O157:H7.